Here is a 931-residue protein sequence, read N- to C-terminus: MGVASSNTAAGGVVPGENINNDETLSNNNKNNNNNNNNNNNNNNNNNNNSSTTTNLLVAADTAIANMASFYQSTLSDDFKLLASENQLPEDLDTFMETLLFSLNFSEESNHNYVYGLLNELSKQLVSNNLKTKNFNRILMHFINKLNLFNQQLITISESMKKNKGSKQQLILDQSVEIQLYTHQQFLVNYTILIQTFSKYIIENMDHVNIIQQFTGDSENSFKTIPFDLILSILGFLSNELRDCSYDLHDVLLRFILILFSTEMYLPLPTIQENYLTDTFTVDFSFYELLAPKTNIFLNILMDTVYNNPNSPIVYSFIFNLFNNIIENKPPPSTSNSLLDSIGSAASYLLLLPLNAYKYFFPQNNATGNSMTELSTFNLLVLVQYNYPKGNPFRKILSNIQDKDFSIDLLNSNPNNHQIRISMQQLYESIIKSPSSDKNILLLYYLLQENSFFFRYVQSRTDLDNLLLPMIQILYNSFEEKPQQVNMILIIILILSQDSLFNENVHSLIVHQILWYKERLLIDVSLGGILMVVLIKSIILNLSKLRDAHLHTNCLAILANLSSNISHIHPYVANRLVKLLEILSKRYIKLKKMLNQVDSPSKINTNNSNNNVKDNTNNITQSMSSVSISDDLSLDVNQLQQIKNLENHNSSINKHHNESHNNSSFLNSPDLNLKELQSEELTTHSEFLYIVLQIINNTLTYRAYSNPHLIYSLLHQQEYFPVFLNEENLSSLSNNILNILSYFSSELKHAINGLSQQETTAETIMSFIESKSKSLPVPPPDQEGILRFKYEEESTSFEFITPYVWSIIFNYSGEKWDTKNITLFPTVDLTTIKSPSVIDANNFTPKKQLSSDQLHSPPTNTTTTTTTTTNSTSSNTILNSMPIPPPNTQLQQQNNLRNQEQNQEENGDEKDDKIEKEQTTGVELSSTEKTN.

Disordered regions lie at residues 1–53, 599–618, and 839–931; these read MGVA…SSTT, SPSKINTNNSNNNVKDNTNN, and DANN…EKTN. Gly2 carries N-myristoyl glycine lipidation. Low complexity-rich tracts occupy residues 27–49 and 601–618; these read NNNKNNNNNNNNNNNNNNNNNNN and SKINTNNSNNNVKDNTNN. The segment covering 839–858 has biased composition (polar residues); sequence DANNFTPKKQLSSDQLHSPP. 2 stretches are compositionally biased toward low complexity: residues 859–876 and 889–901; these read TNTTTTTTTTTNSTSSNT and QLQQQNNLRNQEQ. Residues 919–931 show a composition bias toward polar residues; that stretch reads TTGVELSSTEKTN.

Belongs to the dymeclin family.

The polypeptide is Dymeclin (dym) (Dictyostelium discoideum (Social amoeba)).